A 73-amino-acid chain; its full sequence is Large ribosomal subunit protein bL31 (73 aa).

This sequence belongs to the bacterial ribosomal protein bL31 family. Type A subfamily. As to quaternary structure, part of the 50S ribosomal subunit.

In terms of biological role, binds the 23S rRNA. The sequence is that of Large ribosomal subunit protein bL31 (rpmE) from Jannaschia sp. (strain CCS1).